We begin with the raw amino-acid sequence, 197 residues long: Recombination protein RecR (197 aa).

The C4-type zinc finger occupies 56-71; sequence CPVCGTLDTRAPCSIC. The 96-residue stretch at 79–174 folds into the Toprim domain; the sequence is TLICVVRDVA…TVSGLAQGVP (96 aa).

This sequence belongs to the RecR family.

May play a role in DNA repair. It seems to be involved in an RecBC-independent recombinational process of DNA repair. It may act with RecF and RecO. This Rhodospirillum rubrum (strain ATCC 11170 / ATH 1.1.1 / DSM 467 / LMG 4362 / NCIMB 8255 / S1) protein is Recombination protein RecR.